A 150-amino-acid chain; its full sequence is Endoribonuclease YbeY (150 aa).

The Zn(2+) site is built by histidine 116, histidine 120, and histidine 126.

It belongs to the endoribonuclease YbeY family. Zn(2+) is required as a cofactor.

It localises to the cytoplasm. In terms of biological role, single strand-specific metallo-endoribonuclease involved in late-stage 70S ribosome quality control and in maturation of the 3' terminus of the 16S rRNA. The chain is Endoribonuclease YbeY from Beutenbergia cavernae (strain ATCC BAA-8 / DSM 12333 / CCUG 43141 / JCM 11478 / NBRC 16432 / NCIMB 13614 / HKI 0122).